A 444-amino-acid chain; its full sequence is Probable glycine dehydrogenase (decarboxylating) subunit 1 (444 aa).

It belongs to the GcvP family. N-terminal subunit subfamily. The glycine cleavage system is composed of four proteins: P, T, L and H. In this organism, the P 'protein' is a heterodimer of two subunits.

The catalysed reaction is N(6)-[(R)-lipoyl]-L-lysyl-[glycine-cleavage complex H protein] + glycine + H(+) = N(6)-[(R)-S(8)-aminomethyldihydrolipoyl]-L-lysyl-[glycine-cleavage complex H protein] + CO2. The glycine cleavage system catalyzes the degradation of glycine. The P protein binds the alpha-amino group of glycine through its pyridoxal phosphate cofactor; CO(2) is released and the remaining methylamine moiety is then transferred to the lipoamide cofactor of the H protein. The sequence is that of Probable glycine dehydrogenase (decarboxylating) subunit 1 from Chlorobaculum tepidum (strain ATCC 49652 / DSM 12025 / NBRC 103806 / TLS) (Chlorobium tepidum).